The sequence spans 337 residues: D-lactate dehydrogenase (337 aa).

Residues 156–157 (HI), D176, 207–208 (VP), N213, 234–236 (CSR), and D260 contribute to the NAD(+) site. The active site involves R236. The active site involves E265. H297 (proton donor) is an active-site residue.

This sequence belongs to the D-isomer specific 2-hydroxyacid dehydrogenase family. As to quaternary structure, homodimer.

It catalyses the reaction (R)-lactate + NAD(+) = pyruvate + NADH + H(+). This Lactobacillus helveticus (Lactobacillus suntoryeus) protein is D-lactate dehydrogenase.